A 279-amino-acid polypeptide reads, in one-letter code: MSAHAKQKRLTTASIRQMKGEARIVCLTAYTTPIARLLDPHCDLLLVGDSLGMVLYGMETTVGVTLDMMIAHGRAVMRGVEHACVIVDLPFGTYQESKEQAFRNAVRLMQETGCDGVKLEGGEEMAETIAFLVARGIPVFGHVGLMPQLVHTAGGFRSLGHSDAETQKIWRDGIAVDQAGAFAIVVEGTVEPLARELTEKLAAPTVGIGASPACDGQVLVSDDMLGLFSDFKPKFVKRYADLGTAATQAAAAYADEVRSGAFPGPEHTFQVRKPSPSGK.

2 residues coordinate Mg(2+): Asp-49 and Asp-88. Residues 49–50 (DS), Asp-88, and Lys-118 each bind 3-methyl-2-oxobutanoate. Glu-120 provides a ligand contact to Mg(2+). Glu-187 functions as the Proton acceptor in the catalytic mechanism.

It belongs to the PanB family. In terms of assembly, homodecamer; pentamer of dimers. The cofactor is Mg(2+).

It is found in the cytoplasm. The catalysed reaction is 3-methyl-2-oxobutanoate + (6R)-5,10-methylene-5,6,7,8-tetrahydrofolate + H2O = 2-dehydropantoate + (6S)-5,6,7,8-tetrahydrofolate. It functions in the pathway cofactor biosynthesis; (R)-pantothenate biosynthesis; (R)-pantoate from 3-methyl-2-oxobutanoate: step 1/2. Catalyzes the reversible reaction in which hydroxymethyl group from 5,10-methylenetetrahydrofolate is transferred onto alpha-ketoisovalerate to form ketopantoate. This chain is 3-methyl-2-oxobutanoate hydroxymethyltransferase, found in Agrobacterium fabrum (strain C58 / ATCC 33970) (Agrobacterium tumefaciens (strain C58)).